Reading from the N-terminus, the 230-residue chain is MVPEYSRFYNILGYNFKDYTLLIRALTHRSKTKKNYERLEFLGDSVLSFVIAEVLYKQFTDLAEGKLSQLRSKLVKGTTLAQLASSLKMDEYIILGASEQGGHKREKILEDVFEAVIGAIYLDSDFATVKKVILKWYQPIISSINLDTIKVKDSKSKLQEILLQNALSLPEYSIETIDGKDHEQQFTVVAMSKDLNLRVKAQGTSRKKAEQKAAEKMIEMLSQQGLHEKK.

Residues 5 to 125 enclose the RNase III domain; that stretch reads YSRFYNILGY…VIGAIYLDSD (121 aa). A Mg(2+)-binding site is contributed by E40. Residue D44 is part of the active site. Mg(2+) is bound by residues D111 and E114. E114 is a catalytic residue. The DRBM domain occupies 153–223; it reads DSKSKLQEIL…AEKMIEMLSQ (71 aa).

This sequence belongs to the ribonuclease III family. As to quaternary structure, homodimer. Requires Mg(2+) as cofactor.

Its subcellular location is the cytoplasm. The catalysed reaction is Endonucleolytic cleavage to 5'-phosphomonoester.. In terms of biological role, digests double-stranded RNA. Involved in the processing of primary rRNA transcript to yield the immediate precursors to the large and small rRNAs (23S and 16S). Also processes some mRNAs, and tRNAs when they are encoded in the rRNA operon. CRISPR (clustered regularly interspaced short palindromic repeat) is an adaptive immune system that provides protection against mobile genetic elements (viruses, transposable elements and conjugative plasmids). CRISPR clusters contain spacers, sequences complementary to antecedent mobile elements, and target invading nucleic acids. CRISPR clusters are transcribed and processed into CRISPR RNA (crRNA). In this organism endogenous ribonuclease 3 and Cas9 are required for correct coprocessing of pre-crRNA and the trans-encoded small RNA (tracrRNA). Cas9, crRNA and tracrRNA are required for cleavage of invading DNA. Complements pre-crRNA and tracrRNA coprocessing defects in an rnc deletion in S.pyogenes strain 370. This Francisella tularensis subsp. novicida (strain U112) protein is Ribonuclease 3.